The chain runs to 155 residues: Protein-export protein SecB (155 aa).

It belongs to the SecB family. As to quaternary structure, homotetramer, a dimer of dimers. One homotetramer interacts with 1 SecA dimer.

The protein localises to the cytoplasm. One of the proteins required for the normal export of preproteins out of the cell cytoplasm. It is a molecular chaperone that binds to a subset of precursor proteins, maintaining them in a translocation-competent state. It also specifically binds to its receptor SecA. The sequence is that of Protein-export protein SecB from Escherichia coli O127:H6 (strain E2348/69 / EPEC).